Here is a 396-residue protein sequence, read N- to C-terminus: Alpha-1-antitrypsin (396 aa).

An N-terminal signal peptide occupies residues 1 to 2; sequence HV. The disordered stretch occupies residues 1–24; sequence HVEDPQGDAAQKTDTSHHDQEHST. The segment covering 14–24 has biased composition (basic and acidic residues); it reads DTSHHDQEHST. The residue at position 16 (Ser-16) is a Phosphoserine. N-linked (GlcNAc...) asparagine glycosylation is found at Asn-48, Asn-85, Asn-123, and Asn-249. The tract at residues 351–370 is RCL; the sequence is GAMFLEAIPMSIPPEVKFNK. Ser-361 is subject to Phosphoserine.

The protein belongs to the serpin family. In terms of assembly, interacts with CELA2A. Interacts with ERGIC3 and LMAN1/ERGIC53. Interacts with PRSS1/Trypsin. Plasma.

Its subcellular location is the secreted. In terms of biological role, inhibitor of serine proteases. Its primary target is elastase, but it also has a moderate affinity for plasmin and thrombin. Inhibits trypsin, chymotrypsin and plasminogen activator. This Chlorocebus aethiops (Green monkey) protein is Alpha-1-antitrypsin (SERPINA1).